Consider the following 25-residue polypeptide: Alpha-lytic protease (25 aa).

The protein belongs to the peptidase S1 family.

The catalysed reaction is Preferential cleavage: Ala-|-Xaa, Val-|-Xaa in bacterial cell walls, elastin and other proteins.. This is Alpha-lytic protease from Achromobacter lyticus.